Here is a 79-residue protein sequence, read N- to C-terminus: Pigment-dispersing hormone type 1 (79 aa).

Positions M1–A22 are cleaved as a signal peptide. A76 is subject to Alanine amide.

The protein belongs to the arthropod PDH family. As to expression, eyestalk.

Its subcellular location is the secreted. The pigment-dispersing hormone causes the migration of the distal retinal pigment into the proximal end of the pigment chromatophore cells and thus decreases the amount of light entering the retinulas. May also function as a neurotransmitter and/or neuromodulator. This is Pigment-dispersing hormone type 1 (PDH1) from Penaeus vannamei (Whiteleg shrimp).